A 229-amino-acid polypeptide reads, in one-letter code: GTP cyclohydrolase 1 (229 aa).

The interval 1–21 (MDAKIKPLRAGKSADARTDFQ) is disordered. Cys118, His121, and Cys189 together coordinate Zn(2+).

It belongs to the GTP cyclohydrolase I family. In terms of assembly, toroid-shaped homodecamer, composed of two pentamers of five dimers.

The catalysed reaction is GTP + H2O = 7,8-dihydroneopterin 3'-triphosphate + formate + H(+). The protein operates within cofactor biosynthesis; 7,8-dihydroneopterin triphosphate biosynthesis; 7,8-dihydroneopterin triphosphate from GTP: step 1/1. The polypeptide is GTP cyclohydrolase 1 (Rhodopseudomonas palustris (strain HaA2)).